Here is a 356-residue protein sequence, read N- to C-terminus: NAC domain-containing protein JA2L (356 aa).

The 149-residue stretch at 14 to 162 (LPPGFRFYPT…DWVLCRIYKK (149 aa)) folds into the NAC domain. The DNA-binding element occupies 111 to 168 (VGIKKALVFYIGKAPKGTKTNWIMHEYRLSEPTTKTGSSRLDDWVLCRIYKKNSGGQK). A disordered region spans residues 163–191 (NSGGQKSSCSDLQNKDISHASSSSSSSQF). Residues 164–174 (SGGQKSSCSDL) are compositionally biased toward polar residues.

As to expression, expressed in guard cells of the epidermis.

It localises to the nucleus. Its function is as follows. Transcription factor that acts downstream of MYC2 in the jasmonate-mediated response to Botrytis cinerea infection. With MYC2 forms a transcription module that regulates wounding-responsive genes. Involved in jasmonate- and coronatine-mediated stomatal reopening in response to Pseudomonas syringae pv tomato DC3000 infection. Regulates the expression of threonine deaminase 2 (TD2) through promoter binding. The protein is NAC domain-containing protein JA2L of Solanum lycopersicum (Tomato).